Here is a 161-residue protein sequence, read N- to C-terminus: Pleiotrophin-A (161 aa).

An N-terminal signal peptide occupies residues methionine 1–glycine 23. 5 disulfide bridges follow: cysteine 41/cysteine 70, cysteine 49/cysteine 79, cysteine 56/cysteine 83, cysteine 93/cysteine 125, and cysteine 103/cysteine 135. 2 chondroitin sulfate binding regions span residues lysine 86 to cysteine 93 and lysine 117 to cysteine 125. The interval glycine 136 to aspartate 161 is disordered. The interval proline 141–aspartate 161 is chondroitin sulfate A binding.

This sequence belongs to the pleiotrophin family. As to expression, expressed in high levels in brain and eye. Lower levels in bone. In the tailbud embryo stage, it is expressed exclusively in the central nervous system, especially in the hind region of the brain.

It is found in the secreted. Its function is as follows. Secreted growth factor that mediates its signal through cell-surface proteoglycan and non-proteoglycan receptors. Binds cell-surface proteoglycan receptor via their chondroitin sulfate (CS) groups. Thereby regulates many processes like cell proliferation, cell survival, cell growth, cell differentiation and cell migration. Has antibacterial activity against both Gram-positive and Gram-negative bacteria. The chain is Pleiotrophin-A (ptn-a) from Xenopus laevis (African clawed frog).